Reading from the N-terminus, the 965-residue chain is Valine--tRNA ligase (965 aa).

Residues 1–12 (MEKTPATQTQAE) are compositionally biased toward polar residues. A disordered region spans residues 1–23 (MEKTPATQTQAEPSLDKTYNPKE). The short motif at 56–66 (PNVTGSLHMGH) is the 'HIGH' region element. A 'KMSKS' region motif is present at residues 568-572 (KMSKS). Lys571 serves as a coordination point for ATP. The stretch at 893-960 (MAGLVDKEAE…SKEKLLAQKE (68 aa)) forms a coiled coil.

It belongs to the class-I aminoacyl-tRNA synthetase family. ValS type 1 subfamily. Monomer.

The protein localises to the cytoplasm. It carries out the reaction tRNA(Val) + L-valine + ATP = L-valyl-tRNA(Val) + AMP + diphosphate. In terms of biological role, catalyzes the attachment of valine to tRNA(Val). As ValRS can inadvertently accommodate and process structurally similar amino acids such as threonine, to avoid such errors, it has a 'posttransfer' editing activity that hydrolyzes mischarged Thr-tRNA(Val) in a tRNA-dependent manner. The chain is Valine--tRNA ligase from Photorhabdus laumondii subsp. laumondii (strain DSM 15139 / CIP 105565 / TT01) (Photorhabdus luminescens subsp. laumondii).